Here is a 319-residue protein sequence, read N- to C-terminus: Putative peptide permease protein BRA0408/BS1330_II0405 (319 aa).

The next 6 helical transmembrane spans lie at 9–29, 102–122, 138–158, 182–202, 242–262, and 284–304; these read LLIG…LLQL, LLLM…TGII, LALL…LYVF, LLRH…ALIM, LPVV…AIFI, and YPVI…VNIL. The region spanning 98–305 is the ABC transmembrane type-1 domain; it reads IGPTLLLMAA…ACVIIVNILT (208 aa).

Belongs to the binding-protein-dependent transport system permease family. The complex is composed of two ATP-binding proteins (BRA0404 and BRA0405), two transmembrane proteins (BRA0407 and BRA0408) and a solute-binding protein (BRA0409).

The protein localises to the cell inner membrane. Probably part of an ABC transporter complex that could be involved in peptide import. Probably responsible for the translocation of the substrate across the membrane. In Brucella suis biovar 1 (strain 1330), this protein is Putative peptide permease protein BRA0408/BS1330_II0405.